The chain runs to 108 residues: uncharacterized protein (108 aa).

Over residues 1–15 the composition is skewed to polar residues; that stretch reads MSDSNSRLVYSTQTG. A disordered region spans residues 1–29; the sequence is MSDSNSRLVYSTQTGRIEEPKTAPVRPKG. Residues 16–29 show a composition bias toward basic and acidic residues; the sequence is RIEEPKTAPVRPKG.

Belongs to the SUI1 family.

This is an uncharacterized protein from Salmonella typhi.